The primary structure comprises 352 residues: MLELNFSQTLGNHCLTINETLPANGITAIFGVSGAGKTSLINAISGLTRPQKGRIVLNGRVLNDAEKGICLTPEKRRVGYVFQDARLFPHYKVRGNLRYGMSKSMVDQFDKLVALLGIEPLLDRLPGSLSGGEKQRVAIGRALLTAPELLLLDEPLASLDIPRKRELLPYLQRLTREINIPMLYVSHSLDEILHLADRVMVLENGQVKAFGALEEVWGSSVMNPWLPKEQQSSILKVTVLEHHPHYAMTALALGDQHLWVNKLDEPLQAALRIRIQASDVSLVLQPPQQTSIRNVLRAKVVNSYDDNGQVEVELEVGGKTLWARISPWARDELAIKPGLWLYAQIKSVSITA.

An ABC transporter domain is found at 1–229 (MLELNFSQTL…SVMNPWLPKE (229 aa)). ATP is bound at residue 31 to 38 (GVSGAGKT). Residues 289–352 (QTSIRNVLRA…AQIKSVSITA (64 aa)) form the Mop domain.

This sequence belongs to the ABC transporter superfamily. Molybdate importer (TC 3.A.1.8) family. In terms of assembly, the complex is composed of two ATP-binding proteins (ModC), two transmembrane proteins (ModB) and a solute-binding protein (ModA).

The protein localises to the cell inner membrane. It catalyses the reaction molybdate(out) + ATP + H2O = molybdate(in) + ADP + phosphate + H(+). Its function is as follows. Part of the ABC transporter complex ModABC involved in molybdenum import. Responsible for energy coupling to the transport system. The sequence is that of Molybdenum import ATP-binding protein ModC from Escherichia coli (strain K12).